A 253-amino-acid chain; its full sequence is MSLALGHGTIAGSTAAPLSEEGEVTSGLQALAVEDTGGPSVSASKAEEEGKGSQEEAGREGSRPEEALEAPSAASDERAEGEAEDWCVPCSDEEVELPANGQSWMPPPSEIQRLYELLATQGTLELQAEILPRRPPTPEAQSEEERSDEEPEAKEEEEEKPHMPTEFDFDDEPMTPKDSLIDRRRTPGSSARSQKREARLDKVLSDMKRHKKLEEQILRTGRDLFSLDSEGPSPTSPPLRSSGNSLFPRQRKY.

Disordered regions lie at residues 1–108 (MSLA…MPPP) and 126–253 (LQAE…QRKY). The segment covering 45–66 (KAEEEGKGSQEEAGREGSRPEE) has biased composition (basic and acidic residues). Residues 115–159 (YELLATQGTLELQAEILPRRPPTPEAQSEEERSDEEPEAKEEEEE) are sufficient for interaction with NCOA1. A Phosphothreonine modification is found at T137. The segment covering 141–158 (QSEEERSDEEPEAKEEEE) has biased composition (acidic residues). A phosphoserine mark is found at S142 and S147. Residues 160-253 (KPHMPTEFDF…NSLFPRQRKY (94 aa)) form a sufficient for interaction with ESR1 region. Residues 194–222 (QKREARLDKVLSDMKRHKKLEEQILRTGR) are compositionally biased toward basic and acidic residues. S236 is modified (phosphoserine). Over residues 238–247 (PLRSSGNSLF) the composition is skewed to polar residues.

In terms of assembly, component of the KMT2 family MLL2/MLL3 complex, at least composed of the histone methyltransferases KMT2D and/or KMT2C, the common subunits ASH2L, RBBP5, WDR5 and DPY30, and the complex type-specific subunits PAXIP1/PTIP, PAGR1, NCOA6 and KDM6A; PAXIP1 is required for the association with the MLL2/MLL3 complex. Forms a constitutive complex with PAXIP1/PTIP independently of the MLL2/MLL3 complex. Interacts with NCOA1, ESR1, NR3C1, AR.

The protein localises to the nucleus. Functionally, its association with the histone methyltransferase MLL2/MLL3 complex is suggesting a role in epigenetic transcriptional activation. However, in association with PAXIP1/PTIP is proposed to function at least in part independently of the MLL2/MLL3 complex. Proposed to be recruited by PAXIP1 to sites of DNA damage where the PAGR1:PAXIP1 complex is required for cell survival in response to DNA damage independently of the MLL2/MLL3 complex. However, its function in DNA damage has been questioned. During immunoglobulin class switching in activated B-cells is involved in transcription regulation of downstream switch regions at the immunoglobulin heavy-chain (Igh) locus independently of the MLL2/MLL3 complex. Involved in both estrogen receptor-regulated gene transcription and estrogen-stimulated G1/S cell-cycle transition. Acts as a transcriptional cofactor for nuclear hormone receptors. Inhibits the induction properties of several steroid receptors such as NR3C1, AR and PPARG; the mechanism of inhibition appears to be gene-dependent. May be involved in the regulation of the BMP pathway in extraembryonic development. This Mus musculus (Mouse) protein is PAXIP1-associated glutamate-rich protein 1A.